Reading from the N-terminus, the 274-residue chain is Acyl-[acyl-carrier-protein]--UDP-N-acetylglucosamine O-acyltransferase (274 aa).

It belongs to the transferase hexapeptide repeat family. LpxA subfamily. In terms of assembly, homotrimer.

The protein localises to the cytoplasm. It catalyses the reaction a (3R)-hydroxyacyl-[ACP] + UDP-N-acetyl-alpha-D-glucosamine = a UDP-3-O-[(3R)-3-hydroxyacyl]-N-acetyl-alpha-D-glucosamine + holo-[ACP]. The protein operates within glycolipid biosynthesis; lipid IV(A) biosynthesis; lipid IV(A) from (3R)-3-hydroxytetradecanoyl-[acyl-carrier-protein] and UDP-N-acetyl-alpha-D-glucosamine: step 1/6. Functionally, involved in the biosynthesis of lipid A, a phosphorylated glycolipid that anchors the lipopolysaccharide to the outer membrane of the cell. In Bartonella henselae (strain ATCC 49882 / DSM 28221 / CCUG 30454 / Houston 1) (Rochalimaea henselae), this protein is Acyl-[acyl-carrier-protein]--UDP-N-acetylglucosamine O-acyltransferase.